Consider the following 89-residue polypeptide: MQPCVLWWLALGLLLGIPAGAKPTPEEADPNAQPPAMPYWPFSTSDFWNYVQYFQSQGAYPQIEDMARTFFAHFPLGSTLGFHVPYQED.

The first 21 residues, 1 to 21, serve as a signal peptide directing secretion; the sequence is MQPCVLWWLALGLLLGIPAGA.

Belongs to the otospiralin family. As to expression, ear specific. Expressed in the cochlea and vestibule, but not in the cochlear nerve, cochlear nucleus, spinal chord, muscle, cerebral cortex, cerebellum, diencephalon and olfactory bulb. In the cochlea, expressed in fibrocytes of the spiral limbus, spiral ligament and suprastrial zone. In the vestibule, expressed in cells located to the stroma below the macular and crista sensory epithelia and in the subepithelial layer of the walls of semicircular canals and maculae.

The protein resides in the secreted. In terms of biological role, may be essential for the survival of the neurosensory epithelium of the inner ear. This Rattus norvegicus (Rat) protein is Otospiralin (Otos).